Reading from the N-terminus, the 445-residue chain is 3-phosphoshikimate 1-carboxyvinyltransferase (445 aa).

The tract at residues 1–25 (MSHSDQTSPLEARKSAALSGTARVP) is disordered. Positions 28, 29, and 33 each coordinate 3-phosphoshikimate. A phosphoenolpyruvate-binding site is contributed by Lys28. Phosphoenolpyruvate-binding residues include Gly101 and Arg129. 3-phosphoshikimate-binding residues include Ser175, Gln177, Asp328, and Lys355. Residue Gln177 participates in phosphoenolpyruvate binding. The active-site Proton acceptor is the Asp328. 2 residues coordinate phosphoenolpyruvate: Arg359 and Arg402.

Belongs to the EPSP synthase family. As to quaternary structure, monomer.

The protein localises to the cytoplasm. The enzyme catalyses 3-phosphoshikimate + phosphoenolpyruvate = 5-O-(1-carboxyvinyl)-3-phosphoshikimate + phosphate. The protein operates within metabolic intermediate biosynthesis; chorismate biosynthesis; chorismate from D-erythrose 4-phosphate and phosphoenolpyruvate: step 6/7. Functionally, catalyzes the transfer of the enolpyruvyl moiety of phosphoenolpyruvate (PEP) to the 5-hydroxyl of shikimate-3-phosphate (S3P) to produce enolpyruvyl shikimate-3-phosphate and inorganic phosphate. The polypeptide is 3-phosphoshikimate 1-carboxyvinyltransferase (Rhodopseudomonas palustris (strain BisB5)).